The chain runs to 477 residues: Putative WAS protein family homolog 4 (477 aa).

Positions 1–180 (MSGVMCLKAS…EGLGGLPSNI (180 aa)) are WHD1. 2 disordered regions span residues 310-420 (QDGV…QGGH) and 434-477 (KGIS…DWES). The span at 315-327 (TPPPPPPPPPPAP) shows a compositional bias: pro residues. Residues 362 to 477 (QGAPREVVDP…QAEDEDDWES (116 aa)) are VCA. In terms of domain architecture, WH2 spans 374–396 (GWATLLESIRQAGGIGKAKLRSM). Over residues 395-411 (SMKERKLEKQQQKEQEQ) the composition is skewed to basic and acidic residues. Over residues 437-449 (SGKGPGAGDGPGG) the composition is skewed to gly residues.

The protein belongs to the WASH1 family. In terms of assembly, interacts (via WHD1 region) with WASHC2C; the interaction is direct.

Its subcellular location is the early endosome membrane. The protein localises to the recycling endosome membrane. Its function is as follows. May act as a nucleation-promoting factor at the surface of endosomes, where it recruits and activates the Arp2/3 complex to induce actin polymerization, playing a key role in the fission of tubules that serve as transport intermediates during endosome sorting. This Homo sapiens (Human) protein is Putative WAS protein family homolog 4 (WASH4P).